We begin with the raw amino-acid sequence, 342 residues long: MDLSEEALAAAAADAEKAFAAAADLDALAVAKTEHLGGKAPLALAQRALGALPKEEKKDAGKRVNVARGRVAEAFEARRAVLLAERDAAVLVAEAIDVTLPARRQQVGARHPITVISERIADVFVAMGWEVAEGPEVETEHFNFDALNFLPDHPARTMQDTFHIAPEGSRQVLRTHTSPVQVRSMLERDLPIYVVCPGRTFRTDELDATHTPVFSQVEGLAVDKGLTMAHLRGTLDAFARALFGPETRTRMRPNYFPFTEPSAEVDVWFPDKKGGAGWVEWGGCGMVNPKVLIASGIDPEVYSGFAFGMGLERTLQFRNGIPDMRDIVEGDVRFTLPFGIQS.

Glutamate 260 lines the Mg(2+) pocket.

Belongs to the class-II aminoacyl-tRNA synthetase family. Phe-tRNA synthetase alpha subunit type 1 subfamily. In terms of assembly, tetramer of two alpha and two beta subunits. Mg(2+) serves as cofactor.

It is found in the cytoplasm. It carries out the reaction tRNA(Phe) + L-phenylalanine + ATP = L-phenylalanyl-tRNA(Phe) + AMP + diphosphate + H(+). This is Phenylalanine--tRNA ligase alpha subunit from Nocardia farcinica (strain IFM 10152).